Here is a 102-residue protein sequence, read N- to C-terminus: NADH-quinone oxidoreductase subunit K (102 aa).

Transmembrane regions (helical) follow at residues 5–25 (IAHYLTVSAILFTLGVFGIFL), 31–51 (IVILMSIELILLSVNLNFVAF), and 66–86 (FVLTVAAAEAAIGLAILVVFF).

Belongs to the complex I subunit 4L family. NDH-1 is composed of 14 different subunits. Subunits NuoA, H, J, K, L, M, N constitute the membrane sector of the complex.

It localises to the cell inner membrane. It carries out the reaction a quinone + NADH + 5 H(+)(in) = a quinol + NAD(+) + 4 H(+)(out). Its function is as follows. NDH-1 shuttles electrons from NADH, via FMN and iron-sulfur (Fe-S) centers, to quinones in the respiratory chain. The immediate electron acceptor for the enzyme in this species is believed to be ubiquinone. Couples the redox reaction to proton translocation (for every two electrons transferred, four hydrogen ions are translocated across the cytoplasmic membrane), and thus conserves the redox energy in a proton gradient. The sequence is that of NADH-quinone oxidoreductase subunit K from Brucella abortus (strain S19).